We begin with the raw amino-acid sequence, 423 residues long: Putative serpin-Z12 (423 aa).

The segment at 1–25 (MAALAAGEPFSGRATGGDGGVRSDV) is disordered. The segment at 370 to 394 (GTVAAASTAVVMMQKGSSLPPVDFV) is RCL.

The protein belongs to the serpin family.

Probable serine protease inhibitor. The chain is Putative serpin-Z12 from Oryza sativa subsp. japonica (Rice).